Consider the following 266-residue polypeptide: Biotin--[acetyl-CoA-carboxylase] ligase (266 aa).

Residues 14 to 202 (RSLRDQLIGA…ELEARIIQWR (189 aa)) enclose the BPL/LPL catalytic domain. Biotin is bound by residues 38 to 39 (ST), Gln-63, Arg-67, and Lys-138.

The protein belongs to the biotin--protein ligase family. As to quaternary structure, monomer in solution. Forms dimers under specific crystallization conditions.

The enzyme catalyses biotin + L-lysyl-[protein] + ATP = N(6)-biotinyl-L-lysyl-[protein] + AMP + diphosphate + H(+). It carries out the reaction biotin + ATP + H(+) = biotinyl-5'-AMP + diphosphate. It catalyses the reaction biotinyl-5'-AMP + L-lysyl-[protein] = N(6)-biotinyl-L-lysyl-[protein] + AMP + 2 H(+). Binding of biotin and ATP significantly increases the thermal stability of BirA and leads to the formation of a high affinity holoenzyme complex. Functionally, catalyzes the transfer of biotin onto a conserved lysine residue of the biotin carboxyl carrier protein (BCCP) domain of acetyl-CoA carboxylase and converts it to active holo-BCCP. Forms an acyl-adenylate intermediate. Cannot use GTP or desthiobiotin. The chain is Biotin--[acetyl-CoA-carboxylase] ligase from Mycobacterium tuberculosis (strain ATCC 25618 / H37Rv).